A 280-amino-acid chain; its full sequence is Antiactivator FleN (280 aa).

ATP is bound by residues 19–26 (KGGVGKTN), Glu-153, Asn-181, 215–217 (PYD), and Arg-221.

The protein belongs to the ParA family. In terms of assembly, forms homodimers. Interacts with FleQ.

With respect to regulation, ATP-binding allows dimerization and subsequent antagonistic effect against FleQ. Functionally, ATPase that plays an important role in maintaining flagellar number in Pseudomonas aeruginosa. Exhibits anti-activator activity against FleQ, the global transcriptional regulator of flagellar genes. The polypeptide is Antiactivator FleN (Pseudomonas aeruginosa (strain ATCC 15692 / DSM 22644 / CIP 104116 / JCM 14847 / LMG 12228 / 1C / PRS 101 / PAO1)).